The sequence spans 333 residues: Fructose-1,6-bisphosphatase class 1 (333 aa).

The Mg(2+) site is built by Glu92, Asp114, Leu116, and Asp117. Residues 117-120 (DGSS) and Asn209 contribute to the substrate site. A Mg(2+)-binding site is contributed by Glu279.

The protein belongs to the FBPase class 1 family. As to quaternary structure, homotetramer. It depends on Mg(2+) as a cofactor.

Its subcellular location is the cytoplasm. It catalyses the reaction beta-D-fructose 1,6-bisphosphate + H2O = beta-D-fructose 6-phosphate + phosphate. The protein operates within carbohydrate biosynthesis; gluconeogenesis. The polypeptide is Fructose-1,6-bisphosphatase class 1 (Alkalilimnicola ehrlichii (strain ATCC BAA-1101 / DSM 17681 / MLHE-1)).